The primary structure comprises 234 residues: Large ribosomal subunit protein uL1 (234 aa).

The protein belongs to the universal ribosomal protein uL1 family. In terms of assembly, part of the 50S ribosomal subunit.

Its function is as follows. Binds directly to 23S rRNA. The L1 stalk is quite mobile in the ribosome, and is involved in E site tRNA release. Functionally, protein L1 is also a translational repressor protein, it controls the translation of the L11 operon by binding to its mRNA. This chain is Large ribosomal subunit protein uL1, found in Escherichia coli O127:H6 (strain E2348/69 / EPEC).